The primary structure comprises 206 residues: Large ribosomal subunit protein uL4 (206 aa).

A disordered region spans residues 46–78 (GNRAQKDREQVKHTTKKPWRQKGTGRARAGMSS). Over residues 58-70 (HTTKKPWRQKGTG) the composition is skewed to basic residues.

Belongs to the universal ribosomal protein uL4 family. As to quaternary structure, part of the 50S ribosomal subunit.

Its function is as follows. One of the primary rRNA binding proteins, this protein initially binds near the 5'-end of the 23S rRNA. It is important during the early stages of 50S assembly. It makes multiple contacts with different domains of the 23S rRNA in the assembled 50S subunit and ribosome. Functionally, forms part of the polypeptide exit tunnel. In Burkholderia cenocepacia (strain ATCC BAA-245 / DSM 16553 / LMG 16656 / NCTC 13227 / J2315 / CF5610) (Burkholderia cepacia (strain J2315)), this protein is Large ribosomal subunit protein uL4.